The sequence spans 311 residues: Ribosomal RNA small subunit methyltransferase H (311 aa).

S-adenosyl-L-methionine contacts are provided by residues 32-34, D52, F78, D99, and Q106; that span reads GGH.

This sequence belongs to the methyltransferase superfamily. RsmH family.

Its subcellular location is the cytoplasm. It carries out the reaction cytidine(1402) in 16S rRNA + S-adenosyl-L-methionine = N(4)-methylcytidine(1402) in 16S rRNA + S-adenosyl-L-homocysteine + H(+). Specifically methylates the N4 position of cytidine in position 1402 (C1402) of 16S rRNA. This Halothermothrix orenii (strain H 168 / OCM 544 / DSM 9562) protein is Ribosomal RNA small subunit methyltransferase H.